Consider the following 666-residue polypeptide: Transmembrane protein 201 (666 aa).

Residue M1 is modified to N-acetylmethionine. Residues 1–213 (MEGVSALLAR…FSSAVKSPVQ (213 aa)) are Nuclear-facing. Residues 214 to 234 (VILLRALAFLACAFLLTTALY) form a helical membrane-spanning segment. Topologically, residues 235 to 297 (GASGHFAPGT…EAWAFGQSHQ (63 aa)) are perinuclear space. The chain crosses the membrane as a helical span at residues 298–318 (TGVVALGLLTCLLAMLLAGRI). Over 319-322 (RLRR) the chain is Nuclear. Residues 323-343 (IDAFCTCLWALLLGLHLAEQH) traverse the membrane as a helical segment. Residues 344–356 (LQAASPSWLDTLK) lie on the Perinuclear space side of the membrane. The chain crosses the membrane as a helical span at residues 357-374 (FSTTSLCCLVGFTAAVAT). Residues 375-644 (RKATGPRRFR…GRFGPSLVRG (270 aa)) are Nuclear-facing. A phosphoserine mark is found at S441, S444, S450, S454, S466, S477, and S480. Positions 502 to 581 (PLPSPAPSVA…PPHVPRKPPL (80 aa)) are disordered. The segment covering 508–520 (PSVAGSVASSSGS) has biased composition (low complexity). S529 carries the post-translational modification Phosphoserine. The chain crosses the membrane as a helical span at residues 645 to 665 (LLAVSLAANALFTSVFLYQSL). Position 666 (R666) is a topological domain, perinuclear space.

Belongs to the TMEM201 family. In terms of assembly, interacts with SUN2 and LMNA. May bind to Ran GTPase; has a greater affinity for Ran-GTP over Ran-GDP. Interacts with EMD.

It localises to the nucleus inner membrane. Its subcellular location is the cytoplasm. The protein localises to the cytoskeleton. The protein resides in the spindle pole. Critical regulator of angiogenesis and endothelial cell (EC) migration. Promotes the migration of endothelial cells, which is essential for angiogenesis. Interacts with the linker of nucleoskeleton and cytoskeleton (LINC) complex, which plays a vital role in connecting the cell's cytoskeleton to the nuclear envelope. This interaction is essential for maintaining cellular structure and facilitating the movement of endothelial cells, which is critical for proper vascular development. Involved in nuclear movement during fibroblast polarization and migration. Overexpression can recruit Ran GTPase to the nuclear periphery. Functionally, may define a distinct membrane domain in the vicinity of the mitotic spindle. Involved in the organization of the nuclear envelope implicating EMD, SUN1 and A-type lamina. The polypeptide is Transmembrane protein 201 (TMEM201) (Homo sapiens (Human)).